The primary structure comprises 431 residues: Intraflagellar transport protein 38 (431 aa).

Residues 177–218 (SAAVQQRIKNLAAECNTLQEEVTTNKREKAKLEEQITQKKQS) adopt a coiled-coil conformation. Positions 346-431 (INTNAEIPDD…EELDPDNIEF (86 aa)) are disordered. Acidic residues predominate over residues 352–370 (IPDDESYSYSYEEEEEEEQ). Residues 384–405 (PETHSNGEKHRGLDELSHKSNE) are compositionally biased toward basic and acidic residues. Positions 420–431 (GGEELDPDNIEF) are enriched in acidic residues.

This sequence belongs to the CLUAP1 family.

It is found in the cell projection. The protein localises to the cilium. Its subcellular location is the flagellum. It localises to the cytoplasm. The protein resides in the cytoskeleton. It is found in the flagellum axoneme. The protein localises to the flagellum basal body. Its function is as follows. Component of the intraflagellar transport complex B (IFT-B) involved in flagellar assembly. The chain is Intraflagellar transport protein 38 from Giardia intestinalis (strain ATCC 50803 / WB clone C6) (Giardia lamblia).